A 219-amino-acid chain; its full sequence is Endo-type membrane-bound lytic murein transglycosylase A-like protein (219 aa).

The protein belongs to the transglycosylase Slt family.

It catalyses the reaction Endolytic cleavage of the (1-&gt;4)-beta-glycosidic linkage between N-acetylmuramic acid (MurNAc) and N-acetylglucosamine (GlcNAc) residues in peptidoglycan with concomitant formation of a 1,6-anhydrobond in the MurNAc residue.. In terms of biological role, murein-degrading enzyme. May play a role in recycling of muropeptides during cell elongation and/or cell division (Potential). In Shigella flexneri, this protein is Endo-type membrane-bound lytic murein transglycosylase A-like protein.